The sequence spans 382 residues: Sulfate adenylyltransferase (382 aa).

The protein belongs to the sulfate adenylyltransferase family.

The catalysed reaction is sulfate + ATP + H(+) = adenosine 5'-phosphosulfate + diphosphate. It participates in sulfur metabolism; hydrogen sulfide biosynthesis; sulfite from sulfate: step 1/3. The polypeptide is Sulfate adenylyltransferase (Staphylothermus marinus (strain ATCC 43588 / DSM 3639 / JCM 9404 / F1)).